Reading from the N-terminus, the 1051-residue chain is Carbamoyl phosphate synthase large chain (1051 aa).

The interval 1 to 399 (MKETPKKVLV…SLQKAVRMLD (399 aa)) is carboxyphosphate synthetic domain. The ATP site is built by R127, R167, G173, G174, K206, L208, E213, G239, V240, H241, Q282, and E296. The ATP-grasp 1 domain maps to 131–325 (RETMIENNLP…LAYVSAKLAL (195 aa)). Residues Q282, E296, and N298 each coordinate Mg(2+). Mn(2+) contacts are provided by Q282, E296, and N298. An oligomerization domain region spans residues 400 to 548 (IGEPGVVGGK…LTYNGTEDDL (149 aa)). The tract at residues 549-930 (EFSQGNKLLI…LKSWLSSIPN (382 aa)) is carbamoyl phosphate synthetic domain. An ATP-grasp 2 domain is found at 673 to 863 (SKLLDKLGIS…LINESMKAIF (191 aa)). Residues R709, K748, I750, E755, G779, V780, H781, S782, Q822, and E834 each contribute to the ATP site. The Mg(2+) site is built by Q822, E834, and N836. Mn(2+) contacts are provided by Q822, E834, and N836. The region spanning 930–1051 (NRIPNKNGIA…FEISEYGGGI (122 aa)) is the MGS-like domain. An allosteric domain region spans residues 931–1051 (RIPNKNGIAL…FEISEYGGGI (121 aa)).

This sequence belongs to the CarB family. Composed of two chains; the small (or glutamine) chain promotes the hydrolysis of glutamine to ammonia, which is used by the large (or ammonia) chain to synthesize carbamoyl phosphate. Tetramer of heterodimers (alpha,beta)4. The cofactor is Mg(2+). Mn(2+) serves as cofactor.

It catalyses the reaction hydrogencarbonate + L-glutamine + 2 ATP + H2O = carbamoyl phosphate + L-glutamate + 2 ADP + phosphate + 2 H(+). The catalysed reaction is hydrogencarbonate + NH4(+) + 2 ATP = carbamoyl phosphate + 2 ADP + phosphate + 2 H(+). It functions in the pathway amino-acid biosynthesis; L-arginine biosynthesis; carbamoyl phosphate from bicarbonate: step 1/1. Its pathway is pyrimidine metabolism; UMP biosynthesis via de novo pathway; (S)-dihydroorotate from bicarbonate: step 1/3. Its function is as follows. Large subunit of the glutamine-dependent carbamoyl phosphate synthetase (CPSase). CPSase catalyzes the formation of carbamoyl phosphate from the ammonia moiety of glutamine, carbonate, and phosphate donated by ATP, constituting the first step of 2 biosynthetic pathways, one leading to arginine and/or urea and the other to pyrimidine nucleotides. The large subunit (synthetase) binds the substrates ammonia (free or transferred from glutamine from the small subunit), hydrogencarbonate and ATP and carries out an ATP-coupled ligase reaction, activating hydrogencarbonate by forming carboxy phosphate which reacts with ammonia to form carbamoyl phosphate. This is Carbamoyl phosphate synthase large chain from Saccharolobus islandicus (strain M.16.27) (Sulfolobus islandicus).